Reading from the N-terminus, the 309-residue chain is Dicarboxylate carrier UCP2 (309 aa).

Topologically, residues 1-16 are mitochondrial intermembrane; it reads MVGFKATDVPPTATVK. Solcar repeat units follow at residues 11 to 106, 114 to 203, and 212 to 297; these read PTAT…VKQF, ASIG…IKDA, and DDLP…LKRA. The important for interaction with long-chain fatty acids stretch occupies residues 16–63; that stretch reads KFLGAGTAACIADLITFPLDTAKVRLQIQGESQGPVHATASAQYRGVM. Residues 17–40 form a helical membrane-spanning segment; that stretch reads FLGAGTAACIADLITFPLDTAKVR. Residues 41–77 lie on the Mitochondrial matrix side of the membrane; it reads LQIQGESQGPVHATASAQYRGVMGTILTMVRTEGPRS. The helical transmembrane segment at 78–103 threads the bilayer; that stretch reads LYNGLVAGLQRQMSFASVRIGLYDSV. Residues 104-119 are Mitochondrial intermembrane-facing; sequence KQFYTKGSEHASIGSR. Residues 120-145 traverse the membrane as a helical segment; that stretch reads LLAGSTTGALAVAVAQPTDVVKVRFQ. Residues 146-173 lie on the Mitochondrial matrix side of the membrane; it reads AQARAGGGRRYQSTVNAYKTIAREEGFR. Residues 174-199 form a helical membrane-spanning segment; sequence GLWKGTSPNVARNAIVNCAELVTYDL. Over 200–217 the chain is Mitochondrial intermembrane; it reads IKDALLKANLMTDDLPCH. Residues 218–242 form a helical membrane-spanning segment; sequence FTSAFGAGFCTTVIASPVDVVKTRY. The Mitochondrial matrix portion of the chain corresponds to 243 to 268; sequence MNSALGQYSSAGHCALTMLQKEGPRA. The chain crosses the membrane as a helical span at residues 269–294; it reads FYKGFMPSFLRLGSWNVVMFVTYEQL. The interval 278–285 is important for interaction with long-chain fatty acids; that stretch reads LRLGSWNV. Residues 295-309 are Mitochondrial intermembrane-facing; the sequence is KRALMAACTSREAPF.

This sequence belongs to the mitochondrial carrier (TC 2.A.29) family. In terms of assembly, homotetramer. Adopts an asymmetrical dimer of dimers functional form. Interacts with MICU1 (when methylated); leading to decrease the calcium sensitivity of MICU1.

The protein localises to the mitochondrion inner membrane. The enzyme catalyses L-aspartate(out) + phosphate(in) + H(+)(in) = L-aspartate(in) + phosphate(out) + H(+)(out). It carries out the reaction oxaloacetate(out) + phosphate(in) + H(+)(in) = oxaloacetate(in) + phosphate(out) + H(+)(out). The catalysed reaction is (S)-malate(out) + phosphate(in) + H(+)(in) = (S)-malate(in) + phosphate(out) + H(+)(out). It catalyses the reaction malonate(out) + phosphate(in) + H(+)(in) = malonate(in) + phosphate(out) + H(+)(out). The enzyme catalyses sulfate(out) + phosphate(in) + H(+)(in) = sulfate(in) + phosphate(out) + H(+)(out). It carries out the reaction (S)-malate(out) = (S)-malate(in). The catalysed reaction is L-aspartate(out) = L-aspartate(in). It catalyses the reaction phosphate(in) = phosphate(out). The enzyme catalyses chloride(in) = chloride(out). It carries out the reaction H(+)(in) = H(+)(out). The catalysed reaction is a long-chain fatty acid(out) = a long-chain fatty acid(in). Its function is as follows. Antiporter that exports dicarboxylate intermediates of the Krebs cycle in exchange for phosphate plus a proton across the inner membrane of mitochondria, a process driven by mitochondrial motive force with an overall impact on glycolysis, glutaminolysis and glutathione-dependent redox balance. Continuous export of oxaloacetate and related four-carbon dicarboxylates from mitochondrial matrix into the cytosol negatively regulates the oxidation of acetyl-CoA substrates via the Krebs cycle lowering the ATP/ADP ratio and reactive oxygen species (ROS) production. May mediate inducible proton entry into the mitochondrial matrix affecting ATP turnover as a protection mechanism against oxidative stress. The proton currents are most likely associated with fatty acid flipping across the inner membrane of mitochondria in a metabolic process regulated by free fatty acids and purine nucleotides. Regulates the use of glucose as a source of energy. Required for glucose-induced DRP1-dependent mitochondrial fission and neuron activation in the ventromedial nucleus of the hypothalamus (VMH). This mitochondrial adaptation mechanism modulates the VMH pool of glucose-excited neurons with an impact on systemic glucose homeostasis. Regulates ROS levels and metabolic reprogramming of macrophages during the resolution phase of inflammation. Attenuates ROS production in response to IL33 to preserve the integrity of the Krebs cycle required for persistent production of itaconate and subsequent GATA3-dependent differentiation of inflammation-resolving alternatively activated macrophages. Can unidirectionally transport anions including L-malate, L-aspartate, phosphate and chloride ions. Does not mediate adaptive thermogenesis. This chain is Dicarboxylate carrier UCP2 (UCP2), found in Pongo abelii (Sumatran orangutan).